Here is a 103-residue protein sequence, read N- to C-terminus: Cell division suppressor protein YneA (103 aa).

In terms of domain architecture, LysM spans 36 to 87 (VKIEVQEGDTLWELADRIKGGKTADKHKFIEWVADKNNLPTSVIKPGDVLIL).

Belongs to the YneA family.

Its subcellular location is the cytoplasm. Inhibits cell division during the SOS response. Affects a later stage of the cell division protein assembly, after the assembly of the Z ring, by probably suppressing recruitment of FtsL and/or DivIC to the division machinery. This Bacillus licheniformis (strain ATCC 14580 / DSM 13 / JCM 2505 / CCUG 7422 / NBRC 12200 / NCIMB 9375 / NCTC 10341 / NRRL NRS-1264 / Gibson 46) protein is Cell division suppressor protein YneA.